Here is a 74-residue protein sequence, read N- to C-terminus: Protein SlyX homolog (74 aa).

A disordered region spans residues 52-74; it reads LKQMQENQSTDSDPADEPPPPHY.

Belongs to the SlyX family.

This chain is Protein SlyX homolog, found in Idiomarina loihiensis (strain ATCC BAA-735 / DSM 15497 / L2-TR).